A 529-amino-acid polypeptide reads, in one-letter code: Listeriolysin O (529 aa).

The N-terminal stretch at 1-24 (MKKIMLVFITLILISLPIAQQTEA) is a signal peptide. Positions 35–54 (SISSMAPPASPPASPKTPIE) are disordered. Beta stranded transmembrane passes span 214–227 (ESQL…AFKA), 234–243 (VNFGAISEGK), 312–321 (STKVKAAFDA), and 329–341 (SGDV…IKNS). The Conserved undecapeptide signature appears at 483–493 (ECTGLAWEWWR). Residues 515–516 (TL) carry the Cholesterol binding motif.

It belongs to the cholesterol-dependent cytolysin family. As to quaternary structure, homooligomeric pore complex of 35 to 50 subunits; when inserted in the host membrane.

The protein localises to the secreted. Its subcellular location is the host membrane. The protein resides in the host cell membrane. Activity of listeriolysin O is regulated on multiple levels. It should be high in the phagosome, thereby allowing escape of the bacteria from the phagosomal compartment. Then, once inside the host cytosol, the activity must be controlled to prevent lysis of the host plasma membrane and loss of the intracellular environment. In terms of biological role, a cholesterol-dependent toxin that causes cytolysis by forming pores in cholesterol containing host membranes. After binding to target membranes, the protein undergoes a major conformation change, leading to its insertion in the host membrane and formation of an oligomeric pore complex. Cholesterol is required for binding to host membranes, membrane insertion and pore formation; cholesterol binding is mediated by a Thr-Leu pair in the C-terminus. Acts as a major virulence factor required for the escape of bacteria from phagosomal vacuoles and entry into the host cytosol. Can be reversibly inactivated by oxidation. In Listeria monocytogenes serotype 4a (strain HCC23), this protein is Listeriolysin O (hly).